Reading from the N-terminus, the 284-residue chain is P2R1A-PPP2R2A-interacting phosphatase regulator 1 (284 aa).

Disordered stretches follow at residues 1 to 32 (MAQE…SNSA), 112 to 198 (EESL…PIKR), and 235 to 284 (AHTL…LPID). Composition is skewed to low complexity over residues 152–164 (SPSL…SSGL) and 172–184 (PTRR…SQSP). Residues 258 to 269 (STGSPVSLSDSR) show a composition bias toward polar residues.

The protein belongs to the FAM122 family.

The protein resides in the nucleus. It localises to the cytoplasm. Functionally, acts as an inhibitor of serine/threonine-protein phosphatase 2A (PP2A) activity. Potentiates ubiquitin-mediated proteasomal degradation of serine/threonine-protein phosphatase 2A catalytic subunit alpha (PPP2CA). Inhibits PP2A-mediated dephosphorylation of WEE1, promoting ubiquitin-mediated proteolysis of WEE1, thereby releasing G2/M checkpoint. The chain is P2R1A-PPP2R2A-interacting phosphatase regulator 1 from Gallus gallus (Chicken).